A 435-amino-acid polypeptide reads, in one-letter code: ATP-dependent Clp protease ATP-binding subunit ClpX 3 (435 aa).

The 53-residue stretch at 1 to 53 (MSSDPPAKTQHCSFCGIEQGRDTPLIAGIEGQICEACVRLAEQVVANWGRKRS) folds into the ClpX-type ZB domain. Cys12, Cys15, Cys34, and Cys37 together coordinate Zn(2+). 125-132 (PTGTGKTL) is an ATP binding site.

The protein belongs to the ClpX chaperone family. Component of the ClpX-ClpP complex. Forms a hexameric ring that, in the presence of ATP, binds to fourteen ClpP subunits assembled into a disk-like structure with a central cavity, resembling the structure of eukaryotic proteasomes.

Its function is as follows. ATP-dependent specificity component of the Clp protease. It directs the protease to specific substrates. Can perform chaperone functions in the absence of ClpP. This Methylococcus capsulatus (strain ATCC 33009 / NCIMB 11132 / Bath) protein is ATP-dependent Clp protease ATP-binding subunit ClpX 3.